The primary structure comprises 320 residues: Adhesin MafA 1/4 (320 aa).

The first 18 residues, 1–18 (MRARLLIPILFSVFILSA), serve as a signal peptide directing secretion. The N-palmitoyl cysteine moiety is linked to residue C19. A lipid anchor (S-diacylglycerol cysteine) is attached at C19. The interval 287–320 (NHTGNSAPSVEADNSHEGYGYSDEAVRQHRQGQP) is disordered.

It belongs to the MafA family.

Its subcellular location is the cell outer membrane. The protein is Adhesin MafA 1/4 (mafA1) of Neisseria gonorrhoeae (strain ATCC 700825 / FA 1090).